Here is a 254-residue protein sequence, read N- to C-terminus: 3-deoxy-manno-octulosonate cytidylyltransferase (254 aa).

This sequence belongs to the KdsB family.

It localises to the cytoplasm. It catalyses the reaction 3-deoxy-alpha-D-manno-oct-2-ulosonate + CTP = CMP-3-deoxy-beta-D-manno-octulosonate + diphosphate. Its pathway is nucleotide-sugar biosynthesis; CMP-3-deoxy-D-manno-octulosonate biosynthesis; CMP-3-deoxy-D-manno-octulosonate from 3-deoxy-D-manno-octulosonate and CTP: step 1/1. It functions in the pathway bacterial outer membrane biogenesis; lipopolysaccharide biosynthesis. Activates KDO (a required 8-carbon sugar) for incorporation into bacterial lipopolysaccharide in Gram-negative bacteria. In Tolumonas auensis (strain DSM 9187 / NBRC 110442 / TA 4), this protein is 3-deoxy-manno-octulosonate cytidylyltransferase.